We begin with the raw amino-acid sequence, 350 residues long: Induced myeloid leukemia cell differentiation protein Mcl-1 homolog (350 aa).

K5 is covalently cross-linked (Glycyl lysine isopeptide (Lys-Gly) (interchain with G-Cter in ubiquitin)). Residues A23–R95 are disordered. Residues S31–E41 show a composition bias toward low complexity. Positions G50–A61 are enriched in gly residues. The segment at R104–Y175 is PEST-like. S121 is subject to Phosphoserine. A Glycyl lysine isopeptide (Lys-Gly) (interchain with G-Cter in ubiquitin) cross-link involves residue K136. Residues A150–E169 are disordered. Position 159 is a phosphoserine; by GSK3-alpha and GSK3-beta (S159). Residue S162 is modified to Phosphoserine. T163 bears the Phosphothreonine mark. Glycyl lysine isopeptide (Lys-Gly) (interchain with G-Cter in ubiquitin) cross-links involve residues K194 and K197. A BH3 motif is present at residues A209–N223. Positions H252–A272 match the BH1 motif. A BH2 motif is present at residues D304–F319. The chain crosses the membrane as a helical span at residues G327–I349.

The protein belongs to the Bcl-2 family. As to quaternary structure, interacts with HIF3A (via C-terminus domain). Interacts with BOK, BIK, BAX, BAK1, and TPT1. Interacts with unphosphorylated BAD. Interacts with BMF, BBC3 and PMAIP1. Interacts with BOP. Interacts with BCL2L11; may sequester BCL2L11 to prevent its pro-apoptotic activity. Interacts with GIMAP5 and HSPA8/HSC70; the interaction between HSPA8 and MCL1 is impaired in the absence of GIMAP5. Cleaved by CASP3 during apoptosis, yielding a pro-apoptotic C-terminal fragment. In terms of processing, rapidly degraded in the absence of phosphorylation in the PEST region. Post-translationally, phosphorylated on Ser-159, by GSK3, in response to IL3/interleukin-3 withdrawal. Phosphorylation at Ser-159 induces ubiquitination and proteasomal degradation, abrogating the anti-apoptotic activity. Treatment with taxol or okadaic acid induces phosphorylation on additional sites. Ubiquitinated. Ubiquitination is induced by phosphorylation at Ser-159. Deubiquitinated by USP20; leading to increased stability. Detected in peripheral blood mononuclear cells and bone marrow.

The protein localises to the membrane. The protein resides in the cytoplasm. It is found in the mitochondrion. Its subcellular location is the nucleus. It localises to the nucleoplasm. Involved in the regulation of apoptosis versus cell survival, and in the maintenance of viability but not of proliferation. Mediates its effects by interactions with a number of other regulators of apoptosis. The protein is Induced myeloid leukemia cell differentiation protein Mcl-1 homolog (MCL1) of Canis lupus familiaris (Dog).